Here is a 217-residue protein sequence, read N- to C-terminus: Growth hormone variant (217 aa).

The first 26 residues, 1–26 (MAAGSWTCLILAIALLCLPWLQEGSA), serve as a signal peptide directing secretion. 2 disulfides stabilise this stretch: Cys-79-Cys-191 and Cys-208-Cys-215. Ser-132 and Ser-176 each carry phosphoserine.

The protein belongs to the somatotropin/prolactin family. In terms of tissue distribution, expressed in the placenta.

The protein localises to the secreted. Its function is as follows. Plays an important role in growth control. Its major role in stimulating body growth is to stimulate the liver and other tissues to secrete IGF1. It stimulates both the differentiation and proliferation of myoblasts. It also stimulates amino acid uptake and protein synthesis in muscle and other tissues. This Macaca mulatta (Rhesus macaque) protein is Growth hormone variant (GH2).